The following is a 440-amino-acid chain: Ferredoxin--NADP reductase (440 aa).

Positions 17–75 (SRVFVYEVVGMRQNEETDQTNYPIRKSGSVFIRVPYNRMNQEMQRITRLGGKIVTIQTV) constitute a CpcD-like domain. The disordered stretch occupies residues 99 to 142 (KSEGNGKATPVKTDSGAKAFAKPPAEEQLKKKDNKGNTMTQAKA). Residues 122 to 133 (PAEEQLKKKDNK) are compositionally biased toward basic and acidic residues. Residues 155-279 (NAPFIGKVIS…TGPVGKEMLL (125 aa)) form the FAD-binding FR-type domain. Residues 214–217 (RLYS), 235–237 (CVR), Tyr-241, 253–255 (VCS), and Thr-294 contribute to the FAD site. The NADP(+) site is built by Ser-217 and Arg-237. Residues Thr-294, 330–331 (VP), 360–361 (SR), 370–374 (RMYIQ), 399–400 (GL), and Glu-438 contribute to the NADP(+) site.

This sequence belongs to the ferredoxin--NADP reductase type 1 family. Requires FAD as cofactor.

It is found in the cellular thylakoid membrane. The enzyme catalyses 2 reduced [2Fe-2S]-[ferredoxin] + NADP(+) + H(+) = 2 oxidized [2Fe-2S]-[ferredoxin] + NADPH. The protein is Ferredoxin--NADP reductase (petH) of Nostoc sp. (strain ATCC 29151 / PCC 7119) (Anabaena sp.).